Reading from the N-terminus, the 195-residue chain is ATP-dependent Clp protease proteolytic subunit (195 aa).

The active-site Nucleophile is Ser99. His124 is an active-site residue.

The protein belongs to the peptidase S14 family. Fourteen ClpP subunits assemble into 2 heptameric rings which stack back to back to give a disk-like structure with a central cavity, resembling the structure of eukaryotic proteasomes.

It is found in the cytoplasm. It catalyses the reaction Hydrolysis of proteins to small peptides in the presence of ATP and magnesium. alpha-casein is the usual test substrate. In the absence of ATP, only oligopeptides shorter than five residues are hydrolyzed (such as succinyl-Leu-Tyr-|-NHMec, and Leu-Tyr-Leu-|-Tyr-Trp, in which cleavage of the -Tyr-|-Leu- and -Tyr-|-Trp bonds also occurs).. Functionally, cleaves peptides in various proteins in a process that requires ATP hydrolysis. Has a chymotrypsin-like activity. Plays a major role in the degradation of misfolded proteins. The protein is ATP-dependent Clp protease proteolytic subunit of Carboxydothermus hydrogenoformans (strain ATCC BAA-161 / DSM 6008 / Z-2901).